The sequence spans 227 residues: Cytochrome c oxidase subunit 2 (227 aa).

Over 1-14 the chain is Mitochondrial intermembrane; it reads MAYPMQLGFQDATS. The helical transmembrane segment at 15–45 threads the bilayer; sequence PIMEELLHFHDHTLMIVFLISSLVLYVISLM. Residues 46-59 are Mitochondrial matrix-facing; that stretch reads LTTKLTHTSTMDAQ. A helical membrane pass occupies residues 60-87; that stretch reads EVETIWTILPAIILILIALPSLRILYMM. Over 88-227 the chain is Mitochondrial intermembrane; sequence DEINNPSLTV…YFEKWSASML (140 aa). Cu cation is bound by residues H161, C196, E198, C200, H204, and M207. A Mg(2+)-binding site is contributed by E198.

It belongs to the cytochrome c oxidase subunit 2 family. As to quaternary structure, component of the cytochrome c oxidase (complex IV, CIV), a multisubunit enzyme composed of 14 subunits. The complex is composed of a catalytic core of 3 subunits MT-CO1, MT-CO2 and MT-CO3, encoded in the mitochondrial DNA, and 11 supernumerary subunits COX4I, COX5A, COX5B, COX6A, COX6B, COX6C, COX7A, COX7B, COX7C, COX8 and NDUFA4, which are encoded in the nuclear genome. The complex exists as a monomer or a dimer and forms supercomplexes (SCs) in the inner mitochondrial membrane with NADH-ubiquinone oxidoreductase (complex I, CI) and ubiquinol-cytochrome c oxidoreductase (cytochrome b-c1 complex, complex III, CIII), resulting in different assemblies (supercomplex SCI(1)III(2)IV(1) and megacomplex MCI(2)III(2)IV(2)). Found in a complex with TMEM177, COA6, COX18, COX20, SCO1 and SCO2. Interacts with TMEM177 in a COX20-dependent manner. Interacts with COX20. Interacts with COX16. Requires Cu cation as cofactor.

It localises to the mitochondrion inner membrane. It catalyses the reaction 4 Fe(II)-[cytochrome c] + O2 + 8 H(+)(in) = 4 Fe(III)-[cytochrome c] + 2 H2O + 4 H(+)(out). Its function is as follows. Component of the cytochrome c oxidase, the last enzyme in the mitochondrial electron transport chain which drives oxidative phosphorylation. The respiratory chain contains 3 multisubunit complexes succinate dehydrogenase (complex II, CII), ubiquinol-cytochrome c oxidoreductase (cytochrome b-c1 complex, complex III, CIII) and cytochrome c oxidase (complex IV, CIV), that cooperate to transfer electrons derived from NADH and succinate to molecular oxygen, creating an electrochemical gradient over the inner membrane that drives transmembrane transport and the ATP synthase. Cytochrome c oxidase is the component of the respiratory chain that catalyzes the reduction of oxygen to water. Electrons originating from reduced cytochrome c in the intermembrane space (IMS) are transferred via the dinuclear copper A center (CU(A)) of subunit 2 and heme A of subunit 1 to the active site in subunit 1, a binuclear center (BNC) formed by heme A3 and copper B (CU(B)). The BNC reduces molecular oxygen to 2 water molecules using 4 electrons from cytochrome c in the IMS and 4 protons from the mitochondrial matrix. The sequence is that of Cytochrome c oxidase subunit 2 (MT-CO2) from Gazella spekei (Speke's gazelle).